The sequence spans 344 residues: Phenylalanine--tRNA ligase alpha subunit (344 aa).

E256 is a Mg(2+) binding site.

This sequence belongs to the class-II aminoacyl-tRNA synthetase family. Phe-tRNA synthetase alpha subunit type 1 subfamily. As to quaternary structure, tetramer of two alpha and two beta subunits. The cofactor is Mg(2+).

The protein resides in the cytoplasm. The enzyme catalyses tRNA(Phe) + L-phenylalanine + ATP = L-phenylalanyl-tRNA(Phe) + AMP + diphosphate + H(+). This chain is Phenylalanine--tRNA ligase alpha subunit, found in Shouchella clausii (strain KSM-K16) (Alkalihalobacillus clausii).